The sequence spans 628 residues: Zinc finger protein 555 (628 aa).

The KRAB domain maps to 4 to 77 (VVFEDVAVDF…ESKIATFTRN (74 aa)). The C2H2-type 1; degenerate zinc-finger motif lies at 172–194 (YQCQECGQAYSCRSHLRMHVRTH). 14 C2H2-type zinc fingers span residues 200–222 (YVCK…VRIH), 228–250 (YECK…LRSH), 256–278 (YKCK…TITH), 284–306 (YKCK…MISH), 312–334 (HKCK…MITH), 340–362 (YECK…ERIH), 368–390 (YECK…ERTH), 396–418 (YECN…MRVH), 424–446 (YECK…MRTH), 452–474 (YECK…VRMH), 480–502 (YECK…MRRH), 508–530 (YKCK…VRTH), 536–558 (YECK…MRLH), and 564–586 (YQCK…VRIH).

It belongs to the krueppel C2H2-type zinc-finger protein family.

It localises to the nucleus. Its function is as follows. May be involved in transcriptional regulation. The chain is Zinc finger protein 555 (ZNF555) from Homo sapiens (Human).